Consider the following 388-residue polypeptide: Tumor protein p53-inducible protein 13 (388 aa).

An N-terminal signal peptide occupies residues 1–27 (MVPPPPPPSRLLLVALVGLLSLHEVVA). At 28-304 (EPAEEAGTRC…ARGPTPRTEE (277 aa)) the chain is on the extracellular side. A helical membrane pass occupies residues 305–325 (AAWAAMALTFLLVLLTLATLC). Residues 326-388 (TRLHRNFRRS…DSGPDSESSD (63 aa)) are Cytoplasmic-facing. The segment covering 361–372 (PSRRIKRSRRRP) has biased composition (basic residues). The interval 361-388 (PSRRIKRSRRRPLLPPTPDSGPDSESSD) is disordered.

The protein localises to the cell membrane. It localises to the cytoplasm. Its function is as follows. May act as a tumor suppressor. Inhibits tumor cell growth, when overexpressed. This chain is Tumor protein p53-inducible protein 13 (Tp53i13), found in Rattus norvegicus (Rat).